The following is a 182-amino-acid chain: Ribosome maturation factor RimM (182 aa).

Positions 102 to 182 constitute a PRC barrel domain; that stretch reads EEDDYYWKDL…RVEVDWDPGF (81 aa).

Belongs to the RimM family. In terms of assembly, binds ribosomal protein uS19.

It is found in the cytoplasm. Functionally, an accessory protein needed during the final step in the assembly of 30S ribosomal subunit, possibly for assembly of the head region. Essential for efficient processing of 16S rRNA. May be needed both before and after RbfA during the maturation of 16S rRNA. It has affinity for free ribosomal 30S subunits but not for 70S ribosomes. The chain is Ribosome maturation factor RimM from Yersinia pseudotuberculosis serotype IB (strain PB1/+).